We begin with the raw amino-acid sequence, 280 residues long: Elongation factor Ts (280 aa).

The segment at 79–82 is involved in Mg(2+) ion dislocation from EF-Tu; that stretch reads TDFV.

This sequence belongs to the EF-Ts family.

It localises to the cytoplasm. Functionally, associates with the EF-Tu.GDP complex and induces the exchange of GDP to GTP. It remains bound to the aminoacyl-tRNA.EF-Tu.GTP complex up to the GTP hydrolysis stage on the ribosome. The polypeptide is Elongation factor Ts (Vibrio vulnificus (strain CMCP6)).